The sequence spans 1437 residues: Envelopment polyprotein (1437 aa).

An N-terminal signal peptide occupies residues 1–21 (MAISTSLLIVALLIKLCLVNT). Topologically, residues 22 to 207 (APPISKCFQD…GYMASSICQN (186 aa)) are lumenal. Residues N65 and N88 are each glycosylated (N-linked (GlcNAc...) asparagine; by host). A helical transmembrane segment spans residues 208–228 (IELIIIIILTLAIFIFMCIIT). The Cytoplasmic segment spans residues 229-312 (RTYICYLMLP…RVARSLCKSK (84 aa)). Residues 313 to 333 (GSSLVISILTAMLILSFITPL) form a helical membrane-spanning segment. The Lumenal portion of the chain corresponds to 334–373 (EAMTTNYPDDKKFTLKEVNDIVLGRDMEQELKSSILILMS). A helical membrane pass occupies residues 374 to 394 (ICGIGIILIFFGLTVLLEIVL). Topologically, residues 395 to 460 (ELIAKRSTIF…TYYIKIRNLK (66 aa)) are cytoplasmic. The chain crosses the membrane as a helical span at residues 461-481 (LIMLIFSIVILMQNATMLVVA). At 482–1391 (GENCWTNTEI…EPLNNFFGNY (910 aa)) the chain is on the lumenal side. N627 and N1173 each carry an N-linked (GlcNAc...) asparagine; by host glycan. A helical membrane pass occupies residues 1392 to 1412 (LNMFLYILGGIILLFLALYIL). Residues 1413-1437 (MPMCARLRDELKRNERLHQMEMKKR) are Cytoplasmic-facing.

It belongs to the orthobunyavirus envelope glycoprotein family. Glycoprotein C and Glycoprotein N interact with each other. Post-translationally, specific enzymatic cleavages in vivo yield mature proteins including nonstructural protein NSm, Glycoprotein C, and Glycoprotein N.

Its subcellular location is the virion membrane. The protein localises to the host Golgi apparatus membrane. It is found in the host endoplasmic reticulum membrane. Glycoprotein C and Glycoprotein N interact with each other and are present at the surface of the virion. They are able to attach the virion to a cell receptor and to promote fusion of membranes after endocytosis of the virion. This chain is Envelopment polyprotein (GP), found in Culex.